Consider the following 856-residue polypeptide: DNA mismatch repair protein MutS (856 aa).

615 to 622 (GPNMGGKS) serves as a coordination point for ATP. The span at 798 to 807 (ETTGHQQAIK) shows a compositional bias: polar residues. Residues 798–817 (ETTGHQQAIKNPSKAPREEQ) are disordered.

It belongs to the DNA mismatch repair MutS family.

This protein is involved in the repair of mismatches in DNA. It is possible that it carries out the mismatch recognition step. This protein has a weak ATPase activity. The chain is DNA mismatch repair protein MutS from Photobacterium profundum (strain SS9).